Here is a 174-residue protein sequence, read N- to C-terminus: uncharacterized protein (174 aa).

This is an uncharacterized protein from Acidianus convivator (ABV).